The chain runs to 403 residues: Na(+)/H(+) antiporter NhaH (403 aa).

The Cytoplasmic segment spans residues 1–6; the sequence is MHGFHD. Residues 7–27 form a helical membrane-spanning segment; the sequence is VFIQILLLLAISVSVIAIAKL. The Extracellular segment spans residues 28-30; the sequence is LKE. The chain crosses the membrane as a helical span at residues 31 to 51; that stretch reads PDSIALVLVGLVLGLTELPII. Topologically, residues 52-65 are cytoplasmic; that stretch reads EDAERYITQSEVFQ. Residues 66-86 form a helical membrane-spanning segment; sequence ATIISLFLPILLGDATLKLPF. Residues 87–98 are Extracellular-facing; the sequence is HHLFSQKKTVLG. The chain crosses the membrane as a helical span at residues 99 to 119; the sequence is LAFVGTFVSSICIGTAAYFLL. At 120–124 the chain is on the cytoplasmic side; it reads DLPLA. The chain crosses the membrane as a helical span at residues 125–145; sequence VAFTFAALMSATDPISVLSIF. Residues 146–167 are Extracellular-facing; sequence KSLGVPQKMSTVMEGESLFNDG. The helical transmembrane segment at 168–188 threads the bilayer; sequence IAVVLFKIASIYLLTYMEMGW. Topologically, residues 189–195 are cytoplasmic; it reads AGLGSGV. A helical membrane pass occupies residues 196-216; that stretch reads FLFLKFAIGGALVGLVLGYFF. Over 217–218 the chain is Extracellular; that stretch reads SQ. The helical transmembrane segment at 219–239 threads the bilayer; it reads VIRVFDDYPLEVAFSALLFFG. Residues 240–241 lie on the Cytoplasmic side of the membrane; that stretch reads SY. Residues 242-262 form a helical membrane-spanning segment; that stretch reads FIAEHFHTSGVIAVVVGGFVF. Topologically, residues 263–281 are extracellular; the sequence is GDYGAKIGMSKETKTNINT. A helical membrane pass occupies residues 282 to 302; it reads FWDSVTLIANALIFLMVGLEI. The Cytoplasmic segment spans residues 303–310; it reads RNIDLAGN. The chain crosses the membrane as a helical span at residues 311 to 331; that stretch reads WGVIVGAILIVLVGRTIAVYL. Topologically, residues 332–372 are extracellular; the sequence is GTGWVQELSSKERLLINWGGLRGSLSVALALSLPMDFAGRD. A helical transmembrane segment spans residues 373–393; the sequence is QVLLLTFSVVLFSLIVQGLTL. Topologically, residues 394-403 are cytoplasmic; it reads KPLIKKLGMI.

Belongs to the monovalent cation:proton antiporter 1 (CPA1) transporter (TC 2.A.36) family.

It localises to the cell membrane. Functionally, na(+)/H(+) antiporter that extrudes sodium in exchange for external protons. Can also transport lithium. This chain is Na(+)/H(+) antiporter NhaH (nhaH), found in Halobacillus dabanensis.